The chain runs to 407 residues: Biotin synthase (407 aa).

In terms of domain architecture, Radical SAM core spans 47 to 277 (WFGRRVKLNY…DVEVRIAGGR (231 aa)). Positions 65, 69, and 72 each coordinate [4Fe-4S] cluster. [2Fe-2S] cluster is bound by residues C109, C142, C202, and R272. The disordered stretch occupies residues 368–407 (GGGVCAPAPAATTPRPAEEPRTDLVAVRRRGAGTDLAPNA). The span at 373-382 (APAPAATTPR) shows a compositional bias: low complexity.

Belongs to the radical SAM superfamily. Biotin synthase family. Homodimer. It depends on [4Fe-4S] cluster as a cofactor. The cofactor is [2Fe-2S] cluster.

It catalyses the reaction (4R,5S)-dethiobiotin + (sulfur carrier)-SH + 2 reduced [2Fe-2S]-[ferredoxin] + 2 S-adenosyl-L-methionine = (sulfur carrier)-H + biotin + 2 5'-deoxyadenosine + 2 L-methionine + 2 oxidized [2Fe-2S]-[ferredoxin]. It functions in the pathway cofactor biosynthesis; biotin biosynthesis; biotin from 7,8-diaminononanoate: step 2/2. Functionally, catalyzes the conversion of dethiobiotin (DTB) to biotin by the insertion of a sulfur atom into dethiobiotin via a radical-based mechanism. This chain is Biotin synthase, found in Streptomyces coelicolor (strain ATCC BAA-471 / A3(2) / M145).